A 548-amino-acid chain; its full sequence is Chaperonin GroEL (548 aa).

Residues 30-33 (TLGP), lysine 51, 87-91 (DGTTT), glycine 415, 479-481 (NAA), and aspartate 495 contribute to the ATP site.

The protein belongs to the chaperonin (HSP60) family. Forms a cylinder of 14 subunits composed of two heptameric rings stacked back-to-back. Interacts with the co-chaperonin GroES.

The protein localises to the cytoplasm. The catalysed reaction is ATP + H2O + a folded polypeptide = ADP + phosphate + an unfolded polypeptide.. In terms of biological role, together with its co-chaperonin GroES, plays an essential role in assisting protein folding. The GroEL-GroES system forms a nano-cage that allows encapsulation of the non-native substrate proteins and provides a physical environment optimized to promote and accelerate protein folding. The protein is Chaperonin GroEL of Salmonella arizonae (strain ATCC BAA-731 / CDC346-86 / RSK2980).